A 388-amino-acid chain; its full sequence is DNA ADP-ribosyl transferase-DNA ADP-ribosyl glycohydrolase fusion protein (388 aa).

In terms of domain architecture, DarT spans 6–197 (RELYYITHID…PVIPDPTFFF (192 aa)). NAD(+) is bound by residues 10–12 (YIT) and arginine 50. An NAD(+)-binding element region spans residues 34–52 (QSINCKKVYDNSIVLKRKS). Arginine 50 (proton acceptor) is an active-site residue. Residues 107–152 (TDGNAASSETQIYRKSEIKNIKNIISVKDMEYWREEDGSKRKIMAE) are ADP-ribosylating turn-turn loop. Glutamate 152 is an active-site residue. Positions 196–376 (FFLPNREIKL…IYLPLEKRIP (181 aa)) constitute a Macro domain. ADP-D-ribose-binding positions include 215–216 (DM), 227–229 (SVN), threonine 301, 339–343 (GCGLG), and 371–372 (LE).

This sequence in the N-terminal section; belongs to the DarT ADP-ribosyltransferase family. The protein in the C-terminal section; belongs to the DarG ADP-ribosyl glycohydrolase family.

It catalyses the reaction an N-(ADP-alpha-D-ribosyl)-thymidine in DNA + H2O = a thymidine in DNA + ADP-D-ribose. The enzyme catalyses a thymidine in DNA + NAD(+) = an N-(ADP-alpha-D-ribosyl)-thymidine in DNA + nicotinamide + H(+). Functionally, a fusion protein of the toxic and antitoxin components of a hybrid type II/IV toxin-antitoxin (TA) system. The N-terminal domain ADP-ribosylates ssDNA on a thymidine residue, while the C-terminal domain removes the modification, neutralizing the toxic effect. This Thermosipho africanus (strain H17ap60334) protein is DNA ADP-ribosyl transferase-DNA ADP-ribosyl glycohydrolase fusion protein.